Reading from the N-terminus, the 142-residue chain is Large ribosomal subunit protein uL13 (142 aa).

This sequence belongs to the universal ribosomal protein uL13 family. In terms of assembly, part of the 50S ribosomal subunit.

Its function is as follows. This protein is one of the early assembly proteins of the 50S ribosomal subunit, although it is not seen to bind rRNA by itself. It is important during the early stages of 50S assembly. The chain is Large ribosomal subunit protein uL13 from Treponema denticola (strain ATCC 35405 / DSM 14222 / CIP 103919 / JCM 8153 / KCTC 15104).